Consider the following 171-residue polypeptide: Putative auxin-responsive protein IAA29 (171 aa).

The PB1 domain maps to 19-114; the sequence is SRFVKVFMHG…TVKKIYIVPA (96 aa). Positions 117–171 are disordered; it reads QNENDYQEEEEDNAAAAATADEDGDGAAADDGVAAAADDVDDVAGYTSNDDPSFD. The segment covering 142-153 has biased composition (low complexity); that stretch reads GAAADDGVAAAA. A compositionally biased stretch (polar residues) spans 162 to 171; sequence YTSNDDPSFD.

It belongs to the Aux/IAA family. In terms of assembly, homodimers and heterodimers.

It is found in the nucleus. In terms of biological role, aux/IAA proteins are short-lived transcriptional factors that function as repressors of early auxin response genes at low auxin concentrations. In Oryza sativa subsp. japonica (Rice), this protein is Putative auxin-responsive protein IAA29 (IAA29).